A 1206-amino-acid chain; its full sequence is uncharacterized protein (1206 aa).

Disordered stretches follow at residues 133–547 (YDLD…PVDY), 568–837 (FASS…DQLL), and 859–1206 (RQRA…KATS). Composition is skewed to pro residues over residues 139-151 (IPPP…PGPP) and 159-234 (GESP…PPAP). A Phosphoserine modification is found at S255. Residues 305–319 (VRTSSIPVQEAPGAS) show a composition bias toward low complexity. Over residues 351-363 (RALEPEQPREPRP) the composition is skewed to basic and acidic residues. The segment covering 384–413 (APPPAPPLPPPAPPLPPPAPSLPPAAPPLP) has biased composition (pro residues). Residues 414-436 (STELAAPPSSGFMKTSKSNSPAL) are compositionally biased toward low complexity. The segment covering 454-467 (VDWRDPRQMEKLRS) has biased composition (basic and acidic residues). A compositionally biased stretch (low complexity) spans 522-531 (PEKSPSSSSL). Basic and acidic residues predominate over residues 568–577 (FASSAEKEAK). Positions 656–671 (LPKATPGLTLPLKPTP) are enriched in low complexity. T680 carries the post-translational modification Phosphothreonine. Residues 732 to 747 (AEKDLASVRQREKPET) are compositionally biased toward basic and acidic residues. Over residues 1001 to 1016 (IPPPPEFSNDPEPPAP) the composition is skewed to pro residues. Positions 1028 to 1041 (PRNNFSDLGQSWGP) are enriched in polar residues. An omega-N-methylarginine mark is found at R1051, R1083, and R1094. A compositionally biased stretch (polar residues) spans 1170–1184 (PHGNTHYGSPINTFT).

This is an uncharacterized protein from Mus musculus (Mouse).